Here is a 592-residue protein sequence, read N- to C-terminus: Signal peptide peptidase-like 2B (592 aa).

Positions 1–25 are cleaved as a signal peptide; sequence MAAAVAAALARLLAAFLLLAAQVAC. The Lumenal segment spans residues 26-174; it reads EYGMVHVVSQ…APKEPVLDYN (149 aa). The PA domain maps to 71–149; sequence TASLLCSAAD…VALLSYKDML (79 aa). 2 N-linked (GlcNAc...) asparagine glycosylation sites follow: Asn-97 and Asn-129. A helical transmembrane segment spans residues 175-195; it reads MVIIFIMAVGTVAIGGYWAGS. Topologically, residues 196 to 221 are cytoplasmic; it reads RDVKKRYMKHKRDDGPEKQEDEAVDV. A helical membrane pass occupies residues 222 to 244; that stretch reads TPVMTCVFVVMCCSMLVLLYYFY. The Lumenal segment spans residues 245-248; it reads DLLV. Residues 249–271 traverse the membrane as a helical segment; the sequence is YVVIGIFCLASATGLYSCLAPCV. The Cytoplasmic segment spans residues 272–293; it reads RRLPFGKCRIPNNSLPYFHKRP. The helical transmembrane segment at 294 to 314 threads the bilayer; that stretch reads QARMLLLALFCVAVSVVWGVF. Topologically, residues 315–319 are lumenal; sequence RNEDQ. The helical transmembrane segment at 320–340 threads the bilayer; the sequence is WAWVLQDALGIAFCLYMLKTI. The Cytoplasmic portion of the chain corresponds to 341-348; the sequence is RLPTFKAC. Residues 349-369 form a helical membrane-spanning segment; sequence TLLLLVLFLYDIFFVFITPFL. The active site involves Asp-359. The Lumenal portion of the chain corresponds to 370-412; it reads TKSGSSIMVEVATGPSDSATREKLPMVLKVPRLNSSPLALCDR. Residues 413–433 form a helical membrane-spanning segment; that stretch reads PFSLLGFGDILVPGLLVAYCH. Asp-421 is a catalytic residue. At 434–445 the chain is on the cytoplasmic side; the sequence is RFDIQVQSSRVY. A helical transmembrane segment spans residues 446–466; sequence FVACTIAYGVGLLVTFVALAL. The Lumenal segment spans residues 467–470; the sequence is MQRG. Residues 471-491 traverse the membrane as a helical segment; the sequence is QPALLYLVPCTLVTSCAVALW. The PAL signature appears at 472–474; sequence PAL. At 492 to 592 the chain is on the cytoplasmic side; it reads RRELGVFWTG…SPVTQPGASA (101 aa). Residues 512–524 show a composition bias toward pro residues; sequence PWAPAPADGPQPP. The segment at 512–592 is disordered; sequence PWAPAPADGP…SPVTQPGASA (81 aa). A compositionally biased stretch (polar residues) spans 580–592; sequence AQPSPVTQPGASA.

This sequence belongs to the peptidase A22B family. In terms of assembly, monomer. Homodimer. Interacts with ITM2B. Interacts with TNF. Interacts with the simian foamy virus envelope glycoprotein gp130 and its processed leader peptide gp18LP; preferentially interacts with the leader peptide gp18LP. Glycosylated. Expressed predominantly in adrenal cortex and mammary gland.

Its subcellular location is the cell membrane. It is found in the golgi apparatus membrane. It localises to the lysosome membrane. The protein localises to the endosome membrane. The protein resides in the membrane. Its function is as follows. Intramembrane-cleaving aspartic protease (I-CLiP) that cleaves type II membrane signal peptides in the hydrophobic plane of the membrane. Functions in ITM2B and TNF processing. Catalyzes the intramembrane cleavage of the anchored fragment of shed TNF-alpha (TNF), which promotes the release of the intracellular domain (ICD) for signaling to the nucleus. May play a role in the regulation of innate and adaptive immunity. Catalyzes the intramembrane cleavage of the simian foamy virus processed leader peptide gp18 of the envelope glycoprotein gp130 dependently of prior ectodomain shedding by furin or furin-like proprotein convertase (PC)-mediated cleavage proteolysis. In Homo sapiens (Human), this protein is Signal peptide peptidase-like 2B.